Reading from the N-terminus, the 423-residue chain is Serine--tRNA ligase (423 aa).

231-233 (TAE) contacts L-serine. Residue 262 to 264 (RSE) participates in ATP binding. Residue Glu-285 participates in L-serine binding. Residue 349–352 (EIGS) participates in ATP binding. Ser-385 lines the L-serine pocket.

The protein belongs to the class-II aminoacyl-tRNA synthetase family. Type-1 seryl-tRNA synthetase subfamily. Homodimer. The tRNA molecule binds across the dimer.

The protein localises to the cytoplasm. The catalysed reaction is tRNA(Ser) + L-serine + ATP = L-seryl-tRNA(Ser) + AMP + diphosphate + H(+). The enzyme catalyses tRNA(Sec) + L-serine + ATP = L-seryl-tRNA(Sec) + AMP + diphosphate + H(+). The protein operates within aminoacyl-tRNA biosynthesis; selenocysteinyl-tRNA(Sec) biosynthesis; L-seryl-tRNA(Sec) from L-serine and tRNA(Sec): step 1/1. Its function is as follows. Catalyzes the attachment of serine to tRNA(Ser). Is also able to aminoacylate tRNA(Sec) with serine, to form the misacylated tRNA L-seryl-tRNA(Sec), which will be further converted into selenocysteinyl-tRNA(Sec). This Acholeplasma laidlawii (strain PG-8A) protein is Serine--tRNA ligase.